Reading from the N-terminus, the 217-residue chain is Large ribosomal subunit protein uL1 (217 aa).

This sequence belongs to the universal ribosomal protein uL1 family.

This is Large ribosomal subunit protein uL1 (RPL10A) from Candida glabrata (strain ATCC 2001 / BCRC 20586 / JCM 3761 / NBRC 0622 / NRRL Y-65 / CBS 138) (Yeast).